A 219-amino-acid chain; its full sequence is NADH-quinone oxidoreductase subunit C (219 aa).

It belongs to the complex I 30 kDa subunit family. As to quaternary structure, NDH-1 is composed of 14 different subunits. Subunits NuoB, C, D, E, F, and G constitute the peripheral sector of the complex.

The protein resides in the cell inner membrane. It carries out the reaction a quinone + NADH + 5 H(+)(in) = a quinol + NAD(+) + 4 H(+)(out). Its function is as follows. NDH-1 shuttles electrons from NADH, via FMN and iron-sulfur (Fe-S) centers, to quinones in the respiratory chain. The immediate electron acceptor for the enzyme in this species is believed to be ubiquinone. Couples the redox reaction to proton translocation (for every two electrons transferred, four hydrogen ions are translocated across the cytoplasmic membrane), and thus conserves the redox energy in a proton gradient. The polypeptide is NADH-quinone oxidoreductase subunit C (Methylorubrum extorquens (strain PA1) (Methylobacterium extorquens)).